The chain runs to 220 residues: Ribonuclease HII (220 aa).

An RNase H type-2 domain is found at 1 to 210 (MKVAGVDEAG…ARKIEERFRK (210 aa)). A divalent metal cation is bound by residues Asp-7, Glu-8, and Asp-105.

This sequence belongs to the RNase HII family. The cofactor is Mn(2+). Mg(2+) is required as a cofactor.

It localises to the cytoplasm. The enzyme catalyses Endonucleolytic cleavage to 5'-phosphomonoester.. In terms of biological role, endonuclease that specifically degrades the RNA of RNA-DNA hybrids. The sequence is that of Ribonuclease HII (rnhB) from Pyrococcus horikoshii (strain ATCC 700860 / DSM 12428 / JCM 9974 / NBRC 100139 / OT-3).